Consider the following 171-residue polypeptide: Crossover junction endodeoxyribonuclease RuvC (171 aa).

Active-site residues include D7, E66, and D138. Residues D7, E66, and D138 each contribute to the Mg(2+) site.

The protein belongs to the RuvC family. In terms of assembly, homodimer which binds Holliday junction (HJ) DNA. The HJ becomes 2-fold symmetrical on binding to RuvC with unstacked arms; it has a different conformation from HJ DNA in complex with RuvA. In the full resolvosome a probable DNA-RuvA(4)-RuvB(12)-RuvC(2) complex forms which resolves the HJ. Requires Mg(2+) as cofactor.

The protein localises to the cytoplasm. It catalyses the reaction Endonucleolytic cleavage at a junction such as a reciprocal single-stranded crossover between two homologous DNA duplexes (Holliday junction).. Its function is as follows. The RuvA-RuvB-RuvC complex processes Holliday junction (HJ) DNA during genetic recombination and DNA repair. Endonuclease that resolves HJ intermediates. Cleaves cruciform DNA by making single-stranded nicks across the HJ at symmetrical positions within the homologous arms, yielding a 5'-phosphate and a 3'-hydroxyl group; requires a central core of homology in the junction. The consensus cleavage sequence is 5'-(A/T)TT(C/G)-3'. Cleavage occurs on the 3'-side of the TT dinucleotide at the point of strand exchange. HJ branch migration catalyzed by RuvA-RuvB allows RuvC to scan DNA until it finds its consensus sequence, where it cleaves and resolves the cruciform DNA. The polypeptide is Crossover junction endodeoxyribonuclease RuvC (Francisella tularensis subsp. holarctica (strain FTNF002-00 / FTA)).